Consider the following 277-residue polypeptide: Thymidylate synthase (277 aa).

Arginine 21 is a binding site for dUMP. Histidine 51 serves as a coordination point for (6R)-5,10-methylene-5,6,7,8-tetrahydrofolate. 139–140 (RR) is a dUMP binding site. The active-site Nucleophile is cysteine 159. DUMP-binding positions include 179–182 (RSAD), asparagine 190, and 220–222 (HIY). Aspartate 182 provides a ligand contact to (6R)-5,10-methylene-5,6,7,8-tetrahydrofolate. A (6R)-5,10-methylene-5,6,7,8-tetrahydrofolate-binding site is contributed by alanine 276.

It belongs to the thymidylate synthase family. Bacterial-type ThyA subfamily. As to quaternary structure, homodimer.

Its subcellular location is the cytoplasm. The enzyme catalyses dUMP + (6R)-5,10-methylene-5,6,7,8-tetrahydrofolate = 7,8-dihydrofolate + dTMP. It functions in the pathway pyrimidine metabolism; dTTP biosynthesis. Its function is as follows. Catalyzes the reductive methylation of 2'-deoxyuridine-5'-monophosphate (dUMP) to 2'-deoxythymidine-5'-monophosphate (dTMP) while utilizing 5,10-methylenetetrahydrofolate (mTHF) as the methyl donor and reductant in the reaction, yielding dihydrofolate (DHF) as a by-product. This enzymatic reaction provides an intracellular de novo source of dTMP, an essential precursor for DNA biosynthesis. This chain is Thymidylate synthase, found in Roseobacter denitrificans (strain ATCC 33942 / OCh 114) (Erythrobacter sp. (strain OCh 114)).